A 124-amino-acid chain; its full sequence is V-type proton ATPase subunit F (124 aa).

It belongs to the V-ATPase F subunit family. In terms of assembly, V-ATPase is a heteromultimeric enzyme composed of a peripheral catalytic V1 complex (components A to H) attached to an integral membrane V0 proton pore complex (components: a, c, c', c'', d, e, f and VOA1).

It localises to the vacuole membrane. Functionally, subunit of the V1 complex of vacuolar(H+)-ATPase (V-ATPase), a multisubunit enzyme composed of a peripheral complex (V1) that hydrolyzes ATP and a membrane integral complex (V0) that translocates protons. V-ATPase is responsible for acidifying and maintaining the pH of intracellular compartments. This Neosartorya fischeri (strain ATCC 1020 / DSM 3700 / CBS 544.65 / FGSC A1164 / JCM 1740 / NRRL 181 / WB 181) (Aspergillus fischerianus) protein is V-type proton ATPase subunit F (vma7).